A 163-amino-acid chain; its full sequence is Endoribonuclease YbeY (163 aa).

Positions 119, 123, and 129 each coordinate Zn(2+).

It belongs to the endoribonuclease YbeY family. Requires Zn(2+) as cofactor.

It localises to the cytoplasm. Single strand-specific metallo-endoribonuclease involved in late-stage 70S ribosome quality control and in maturation of the 3' terminus of the 16S rRNA. In Actinobacillus pleuropneumoniae serotype 5b (strain L20), this protein is Endoribonuclease YbeY.